Reading from the N-terminus, the 582-residue chain is MTTELAAAPVLSTPDDRILEETDPVVPQTNRILSEEELAITYDIERTLKEIRQARYKRIALQFPDEMLPDAPRVFQLLSRGLEARDIVDGGSKANTETEPTDGLVDSASRLDLKDADEWSPKLYILADTSYGTCCVDEVAAEHVDADVVVHYGRSCLSPTARLPVIYVFTHKELPLDPVLKAFKETYPDPETKVILAADVTYSDHIPEVYSRLVQEGYSSLFATALVHDPSSVIPNRTVPDSVKEAPESLGNWQLFHISEPPTALLLTLASRVAAIHIYPTDGPAGTDVKPLPASTAMVLRRRYAILTRLSTVPIFGILVNTLSVKNYLHIVDHVRDKIAAAGKKSYMFVVGKLNAAKVANFSEIGGWVVIGCWESSLVDSKDFWKPVITPFELEVALKGDEERVWTGAWQSDFQSILDQPPPSSNSPGNSQEANEGPEFGDHARDEDEDAMSEPESAPPEFDLRTGRYVSYSRPMRDSAPRVSASQGATAAISAQTGAADGPSAARALARRAKGDLAMVGNTFSPGAEFLRSQRTWTGLGSDFNSAANVEYDDEENDSTLVVQGRKGIARGYTVGDSIDRH.

3 residues coordinate [4Fe-4S] cluster: C135, C156, and C373. The tract at residues 416 to 467 is disordered; it reads SILDQPPPSSNSPGNSQEANEGPEFGDHARDEDEDAMSEPESAPPEFDLRTG.

It belongs to the DPH1/DPH2 family. DPH2 subfamily. In terms of assembly, component of the 2-(3-amino-3-carboxypropyl)histidine synthase complex composed of dph1, dph2, dph3 and a NADH-dependent reductase, predominantly cbr1. Requires [4Fe-4S] cluster as cofactor.

The protein localises to the cytoplasm. The protein operates within protein modification; peptidyl-diphthamide biosynthesis. Its function is as follows. Required for the first step of diphthamide biosynthesis, a post-translational modification of histidine which occurs in elongation factor 2. Dph1 and dph2 transfer a 3-amino-3-carboxypropyl (ACP) group from S-adenosyl-L-methionine (SAM) to a histidine residue, the reaction is assisted by a reduction system comprising dph3 and a NADH-dependent reductase, predominantly cbr1. Facilitates the reduction of the catalytic iron-sulfur cluster found in the dph1 subunit. In Emericella nidulans (strain FGSC A4 / ATCC 38163 / CBS 112.46 / NRRL 194 / M139) (Aspergillus nidulans), this protein is 2-(3-amino-3-carboxypropyl)histidine synthase subunit 2 (dph2).